The primary structure comprises 336 residues: Anthranilate phosphoribosyltransferase (336 aa).

Residues G79, 82-83 (GD), T87, 89-92 (NIST), 107-115 (KHGNRSVSS), and S119 contribute to the 5-phospho-alpha-D-ribose 1-diphosphate site. Anthranilate is bound at residue G79. S91 provides a ligand contact to Mg(2+). N110 is a binding site for anthranilate. Residue R165 coordinates anthranilate. Residues D224 and E225 each contribute to the Mg(2+) site.

This sequence belongs to the anthranilate phosphoribosyltransferase family. In terms of assembly, homodimer. Mg(2+) is required as a cofactor.

It carries out the reaction N-(5-phospho-beta-D-ribosyl)anthranilate + diphosphate = 5-phospho-alpha-D-ribose 1-diphosphate + anthranilate. It functions in the pathway amino-acid biosynthesis; L-tryptophan biosynthesis; L-tryptophan from chorismate: step 2/5. In terms of biological role, catalyzes the transfer of the phosphoribosyl group of 5-phosphorylribose-1-pyrophosphate (PRPP) to anthranilate to yield N-(5'-phosphoribosyl)-anthranilate (PRA). In Endomicrobium trichonymphae, this protein is Anthranilate phosphoribosyltransferase.